Here is a 354-residue protein sequence, read N- to C-terminus: Uroporphyrinogen decarboxylase (354 aa).

Residues 25 to 29 (RQAGR), D75, Y152, T207, and H330 each bind substrate.

It belongs to the uroporphyrinogen decarboxylase family. As to quaternary structure, homodimer.

The protein localises to the cytoplasm. It carries out the reaction uroporphyrinogen III + 4 H(+) = coproporphyrinogen III + 4 CO2. It functions in the pathway porphyrin-containing compound metabolism; protoporphyrin-IX biosynthesis; coproporphyrinogen-III from 5-aminolevulinate: step 4/4. Functionally, catalyzes the decarboxylation of four acetate groups of uroporphyrinogen-III to yield coproporphyrinogen-III. In Xanthomonas campestris pv. campestris (strain 8004), this protein is Uroporphyrinogen decarboxylase.